A 1441-amino-acid chain; its full sequence is Envelopment polyprotein (1441 aa).

The signal sequence occupies residues 1–13 (MIRMLVLIVVTAA). Residues 14-200 (SPVYQRCFQD…GSIANSICQN (187 aa)) lie on the Lumenal side of the membrane. A glycan (N-linked (GlcNAc...) asparagine; by host) is linked at N57. The chain crosses the membrane as a helical span at residues 201-221 (IEIIILVTLTLLIFILLSILS). The Cytoplasmic segment spans residues 222-305 (KTYICYLLMP…RAARVMCKSK (84 aa)). A helical membrane pass occupies residues 306-326 (GPASILSIITAVLVLTFVTPI). Over 327 to 365 (NSMVLGESKETFELEELPDDMLEMALRINSYYFTCILNY) the chain is Lumenal. The chain crosses the membrane as a helical span at residues 366 to 386 (AVSWGLIIAGLLVGLIFKKYQ). At 387–452 (HRFLNIYAMY…LVQYKAKWMM (66 aa)) the chain is on the cytoplasmic side. A helical transmembrane segment spans residues 453 to 473 (NFLIIYIFLILIKDSAIVGQA). Topologically, residues 474-1395 (TGTDFTTCLE…EPFKNLFGSY (922 aa)) are lumenal. Residues N490 and N1177 are each glycosylated (N-linked (GlcNAc...) asparagine; by host). Residues 1396 to 1416 (IGIFYTFIISIIALLVIIYVL) form a helical membrane-spanning segment. Residues 1417–1441 (LPICFKLRDTLRKHDDAYKREMKIR) lie on the Cytoplasmic side of the membrane.

It belongs to the orthobunyavirus envelope glycoprotein family. As to quaternary structure, glycoprotein C and Glycoprotein N interact with each other. Specific enzymatic cleavages in vivo yield mature proteins including nonstructural protein NSm, glycoprotein C, and glycoprotein N.

Its subcellular location is the virion membrane. The protein resides in the host Golgi apparatus membrane. The protein localises to the host endoplasmic reticulum membrane. Its function is as follows. Glycoprotein C and Glycoprotein N interact with each other and are present at the surface of the virion. They are able to attach the virion to a cell receptor and to promote fusion of membranes after endocytosis of the virion. This chain is Envelopment polyprotein (GP), found in Bunyavirus La Crosse.